The primary structure comprises 268 residues: Undecaprenyl-diphosphatase (268 aa).

7 consecutive transmembrane segments (helical) span residues 47–67, 83–103, 109–129, 144–164, 184–204, 218–238, and 246–266; these read FAVL…FAKL, FVIG…VAGS, LFNP…LLWV, FPLP…IPGV, AAEF…VYDF, IVAI…KTFL, and FELF…ALAM.

It belongs to the UppP family.

It localises to the cell inner membrane. It catalyses the reaction di-trans,octa-cis-undecaprenyl diphosphate + H2O = di-trans,octa-cis-undecaprenyl phosphate + phosphate + H(+). Its function is as follows. Catalyzes the dephosphorylation of undecaprenyl diphosphate (UPP). Confers resistance to bacitracin. The protein is Undecaprenyl-diphosphatase of Rhodopseudomonas palustris (strain BisB5).